Reading from the N-terminus, the 198-residue chain is Recombination protein RecR (198 aa).

Residues 57–72 (CLNCGCLTDEAACYFC) form a C4-type zinc finger. The region spanning 80 to 175 (QIICVTAFPR…QISRLAFGLP (96 aa)) is the Toprim domain.

Belongs to the RecR family.

In terms of biological role, may play a role in DNA repair. It seems to be involved in an RecBC-independent recombinational process of DNA repair. It may act with RecF and RecO. This is Recombination protein RecR from Protochlamydia amoebophila (strain UWE25).